A 219-amino-acid chain; its full sequence is Protoglabretal synthase ISM2 (219 aa).

The next 5 helical transmembrane spans lie at 26–46 (VHAW…VLAG), 59–79 (LMIW…YWLF), 112–132 (AVVG…LFAV), 144–164 (ILQL…FITA), and 178–198 (YYKY…LIII). The EXPERA domain maps to 55–197 (TDKWLMIWWA…TWLLFPALII (143 aa)).

It belongs to the EBP family.

It localises to the membrane. It catalyses the reaction 7,8-epoxymelianol = protoglabretal. The protein operates within secondary metabolite biosynthesis; terpenoid biosynthesis. In terms of biological role, isomerase involved in the biosynthesis of glabretanes triterpene natural products such as glabretal, a component with in vitro antiproliferative properties on lymphocytes. Catalyzes the conversion of 7,8-epoxymelianol to protoglabretal via skeletal rearrangements. This chain is Protoglabretal synthase ISM2, found in Ailanthus altissima (Tree-of-heaven).